Here is a 459-residue protein sequence, read N- to C-terminus: E3 ubiquitin-protein ligase RNF25 (459 aa).

The RWD domain maps to 18–128; that stretch reads SEVEVLESIY…EKGKEILTDN (111 aa). Zn(2+) contacts are provided by cysteine 135, cysteine 138, cysteine 153, histidine 155, histidine 158, cysteine 161, cysteine 198, and cysteine 201. An RING-type zinc finger spans residues 135–202; it reads CVICLYGFQE…AVGVQCPVCR (68 aa). Disordered regions lie at residues 268-309 and 322-459; these read PPAP…PPLP and TRSN…KDGS. The span at 282 to 303 shows a compositional bias: polar residues; that stretch reads KGSQPPSTLAAELSTSPAVQST. 4 stretches are compositionally biased toward basic and acidic residues: residues 349–370, 378–389, 413–424, and 446–459; these read QPER…RDTQ, PLKEPMDLKPEP, RTRDCVRWERSK, and TRRE…KDGS. Serine 450 is modified (phosphoserine).

It belongs to the RNF25 family. As to quaternary structure, interacts with UBE2D2, and may also interact with UBE2E1 and UBE2E3. Interacts with RELA/p65. Ubiquitinated; autoubiquitinated.

The protein resides in the cytoplasm. The enzyme catalyses S-ubiquitinyl-[E2 ubiquitin-conjugating enzyme]-L-cysteine + [acceptor protein]-L-lysine = [E2 ubiquitin-conjugating enzyme]-L-cysteine + N(6)-ubiquitinyl-[acceptor protein]-L-lysine.. The protein operates within protein modification; protein ubiquitination. Functionally, E3 ubiquitin-protein ligase that plays a key role in the RNF14-RNF25 translation quality control pathway, a pathway that takes place when a ribosome has stalled during translation, and which promotes ubiquitination and degradation of translation factors on stalled ribosomes. Catalyzes ubiquitination of RPS27A in response to ribosome collisions, promoting activation of RNF14. RNF25 catalyzes ubiquitination of other ribosomal proteins on stalled ribosomes, such as RPL0, RPL1, RPL12, RPS13 and RPS17. Also involved in ubiquitination and degradation of stalled ETF1/eRF1. Independently of its function in the response to stalled ribosomes, mediates ubiquitination and subsequent proteasomal degradation of NKD2. May also stimulate transcription mediated by NF-kappa-B via its interaction with RELA/p65. This is E3 ubiquitin-protein ligase RNF25 from Homo sapiens (Human).